The sequence spans 363 residues: Phosrestin-2 (363 aa).

The protein belongs to the arrestin family.

In Calliphora vicina (Blue blowfly), this protein is Phosrestin-2 (ARR1).